The sequence spans 109 residues: Putative ankyrin repeat protein L482 (109 aa).

4 ANK repeats span residues Tyr1–Thr26, Asn27–Ser56, Glu57–Ser86, and Asn88–Ala109.

This chain is Putative ankyrin repeat protein L482, found in Acanthamoeba polyphaga (Amoeba).